The primary structure comprises 460 residues: ATP synthase subunit beta (460 aa).

Position 150-157 (150-157 (GGAGVGKT)) interacts with ATP.

The protein belongs to the ATPase alpha/beta chains family. F-type ATPases have 2 components, CF(1) - the catalytic core - and CF(0) - the membrane proton channel. CF(1) has five subunits: alpha(3), beta(3), gamma(1), delta(1), epsilon(1). CF(0) has three main subunits: a(1), b(2) and c(9-12). The alpha and beta chains form an alternating ring which encloses part of the gamma chain. CF(1) is attached to CF(0) by a central stalk formed by the gamma and epsilon chains, while a peripheral stalk is formed by the delta and b chains.

The protein localises to the cell inner membrane. The enzyme catalyses ATP + H2O + 4 H(+)(in) = ADP + phosphate + 5 H(+)(out). Its function is as follows. Produces ATP from ADP in the presence of a proton gradient across the membrane. The catalytic sites are hosted primarily by the beta subunits. The protein is ATP synthase subunit beta of Pectobacterium atrosepticum (strain SCRI 1043 / ATCC BAA-672) (Erwinia carotovora subsp. atroseptica).